The sequence spans 311 residues: Ribonuclease Z (311 aa).

Zn(2+) is bound by residues His-61, His-63, Asp-65, His-66, His-137, Asp-207, and His-263. Asp-65 acts as the Proton acceptor in catalysis.

This sequence belongs to the RNase Z family. Homodimer. Requires Zn(2+) as cofactor.

The catalysed reaction is Endonucleolytic cleavage of RNA, removing extra 3' nucleotides from tRNA precursor, generating 3' termini of tRNAs. A 3'-hydroxy group is left at the tRNA terminus and a 5'-phosphoryl group is left at the trailer molecule.. Zinc phosphodiesterase, which displays some tRNA 3'-processing endonuclease activity. Probably involved in tRNA maturation, by removing a 3'-trailer from precursor tRNA. The sequence is that of Ribonuclease Z from Thermococcus onnurineus (strain NA1).